Reading from the N-terminus, the 136-residue chain is Probable acyltransferase SID5 (136 aa).

Its pathway is siderophore biosynthesis. Probable acyltransferase; part of the gene cluster that mediates the biosynthesis of hydroxamate-containing siderophores that play a critical role in virulence via intracellular iron acquisition during macrophage infection. The sequence is that of Probable acyltransferase SID5 from Ajellomyces capsulatus (Darling's disease fungus).